The chain runs to 338 residues: Glycerol-3-phosphate dehydrogenase [NAD(P)+] (338 aa).

Residues serine 13, tryptophan 14, and lysine 108 each coordinate NADPH. Residues lysine 108, glycine 139, and serine 141 each coordinate sn-glycerol 3-phosphate. Residue alanine 143 coordinates NADPH. Residues lysine 194, aspartate 247, serine 257, arginine 258, and asparagine 259 each contribute to the sn-glycerol 3-phosphate site. The active-site Proton acceptor is lysine 194. Residue arginine 258 participates in NADPH binding. NADPH-binding residues include valine 282 and glutamate 284.

Belongs to the NAD-dependent glycerol-3-phosphate dehydrogenase family.

It is found in the cytoplasm. The enzyme catalyses sn-glycerol 3-phosphate + NAD(+) = dihydroxyacetone phosphate + NADH + H(+). The catalysed reaction is sn-glycerol 3-phosphate + NADP(+) = dihydroxyacetone phosphate + NADPH + H(+). The protein operates within membrane lipid metabolism; glycerophospholipid metabolism. Its function is as follows. Catalyzes the reduction of the glycolytic intermediate dihydroxyacetone phosphate (DHAP) to sn-glycerol 3-phosphate (G3P), the key precursor for phospholipid synthesis. The sequence is that of Glycerol-3-phosphate dehydrogenase [NAD(P)+] from Streptococcus suis (strain 98HAH33).